The sequence spans 297 residues: Acetylglutamate kinase (297 aa).

Residues 68 to 69 (GG), R90, and N195 contribute to the substrate site.

This sequence belongs to the acetylglutamate kinase family. ArgB subfamily.

The protein resides in the cytoplasm. It carries out the reaction N-acetyl-L-glutamate + ATP = N-acetyl-L-glutamyl 5-phosphate + ADP. It functions in the pathway amino-acid biosynthesis; L-arginine biosynthesis; N(2)-acetyl-L-ornithine from L-glutamate: step 2/4. Catalyzes the ATP-dependent phosphorylation of N-acetyl-L-glutamate. This chain is Acetylglutamate kinase, found in Chelativorans sp. (strain BNC1).